Here is a 910-residue protein sequence, read N- to C-terminus: Valine--tRNA ligase (910 aa).

Residues P46 to H56 carry the 'HIGH' region motif. Positions K539–S543 match the 'KMSKS' region motif. Residue K542 participates in ATP binding. A coiled-coil region spans residues D845–L909.

It belongs to the class-I aminoacyl-tRNA synthetase family. ValS type 1 subfamily. Monomer.

The protein localises to the cytoplasm. The enzyme catalyses tRNA(Val) + L-valine + ATP = L-valyl-tRNA(Val) + AMP + diphosphate. Its function is as follows. Catalyzes the attachment of valine to tRNA(Val). As ValRS can inadvertently accommodate and process structurally similar amino acids such as threonine, to avoid such errors, it has a 'posttransfer' editing activity that hydrolyzes mischarged Thr-tRNA(Val) in a tRNA-dependent manner. This is Valine--tRNA ligase from Synechocystis sp. (strain ATCC 27184 / PCC 6803 / Kazusa).